We begin with the raw amino-acid sequence, 154 residues long: MYRMQLLSCIALSLALVTNSAPTSSSTKKTQLQLEHLLLDLQMILNGINNYKNPKLTRMLTFKFYMPKKATELKHLQCLEEELKPLEEVLNLAQSKNFHLRDTKDLISNINVIVLELKGSETTLMCEYADETATIVEFLNRWITFCQSIISTLT.

Residues 1 to 20 (MYRMQLLSCIALSLALVTNS) form the signal peptide. A glycan (O-linked (GalNAc...) threonine) is linked at threonine 23. A disulfide bridge connects residues cysteine 78 and cysteine 126.

This sequence belongs to the IL-2 family.

The protein localises to the secreted. In terms of biological role, cytokine produced by activated CD4-positive helper T-cells and to a lesser extend activated CD8-positive T-cells and natural killer (NK) cells that plays pivotal roles in the immune response and tolerance. Binds to a receptor complex composed of either the high-affinity trimeric IL-2R (IL2RA/CD25, IL2RB/CD122 and IL2RG/CD132) or the low-affinity dimeric IL-2R (IL2RB and IL2RG). Interaction with the receptor leads to oligomerization and conformation changes in the IL-2R subunits resulting in downstream signaling starting with phosphorylation of JAK1 and JAK3. In turn, JAK1 and JAK3 phosphorylate the receptor to form a docking site leading to the phosphorylation of several substrates including STAT5. This process leads to activation of several pathways including STAT, phosphoinositide-3-kinase/PI3K and mitogen-activated protein kinase/MAPK pathways. Functions as a T-cell growth factor and can increase NK-cell cytolytic activity as well. Promotes strong proliferation of activated B-cells and subsequently immunoglobulin production. Plays a pivotal role in regulating the adaptive immune system by controlling the survival and proliferation of regulatory T-cells, which are required for the maintenance of immune tolerance. Moreover, participates in the differentiation and homeostasis of effector T-cell subsets, including Th1, Th2, Th17 as well as memory CD8-positive T-cells. This chain is Interleukin-2 (IL2), found in Macaca mulatta (Rhesus macaque).